Consider the following 702-residue polypeptide: 1,4-alpha-glucan-branching enzyme (702 aa).

Residue Ala-2 is modified to N-acetylalanine. Substrate is bound by residues 62–63 (NE) and 91–93 (WAP). Trp-107 contacts (1,4-alpha-D-glucosyl)n. Residue 118 to 121 (EYGK) participates in substrate binding. Lys-143 is a binding site for (1,4-alpha-D-glucosyl)n. Phosphotyrosine is present on Tyr-173. 333 to 336 (EVLR) provides a ligand contact to substrate. Asp-357 functions as the Nucleophile in the catalytic mechanism. The active-site Proton donor is the Glu-412.

This sequence belongs to the glycosyl hydrolase 13 family. GlgB subfamily. In terms of assembly, monomer.

It carries out the reaction Transfers a segment of a (1-&gt;4)-alpha-D-glucan chain to a primary hydroxy group in a similar glucan chain.. Its pathway is glycan biosynthesis; glycogen biosynthesis. Its function is as follows. Glycogen-branching enzyme participates in the glycogen biosynthetic process along with glycogenin and glycogen synthase. Generates alpha-1,6-glucosidic branches from alpha-1,4-linked glucose chains, to increase solubility of the glycogen polymer. The protein is 1,4-alpha-glucan-branching enzyme (Gbe1) of Mus musculus (Mouse).